A 560-amino-acid polypeptide reads, in one-letter code: Putative transport protein VFMJ11_0927 (560 aa).

5 consecutive transmembrane segments (helical) span residues 8–28 (LLSQNDILLLFVVLALGLFIA), 37–57 (LGSSIGVLITALFMGSLGYTF), 66–86 (FMLFIFCVGIEAGPNFFGIFL), 94–114 (LLVLVVLVSAVSLSFLTGHYF), and 161–181 (NLSVGYAFSYLIGLTSLILLA). RCK C-terminal domains follow at residues 203-292 (RGIG…FRNG) and 293-376 (KEVF…KIGF). A run of 5 helical transmembrane segments spans residues 386 to 406 (LLAFCSFFILGIMFGMITMSF), 409 to 429 (VTFGLGNAVGLLISGITLGFL), 451 to 471 (GLLVFMVGIGLSAGGNINEYF), 478 to 498 (VLAAAFIVSVIPVILAYLVGA), and 539 to 559 (AGTYAIANILMTVAGTIMILL).

The protein belongs to the AAE transporter (TC 2.A.81) family. YbjL subfamily.

The protein localises to the cell membrane. The polypeptide is Putative transport protein VFMJ11_0927 (Aliivibrio fischeri (strain MJ11) (Vibrio fischeri)).